A 253-amino-acid chain; its full sequence is 5-oxoprolinase subunit A (253 aa).

The protein belongs to the LamB/PxpA family. In terms of assembly, forms a complex composed of PxpA, PxpB and PxpC.

The catalysed reaction is 5-oxo-L-proline + ATP + 2 H2O = L-glutamate + ADP + phosphate + H(+). Catalyzes the cleavage of 5-oxoproline to form L-glutamate coupled to the hydrolysis of ATP to ADP and inorganic phosphate. The polypeptide is 5-oxoprolinase subunit A (Bacillus anthracis (strain A0248)).